A 169-amino-acid polypeptide reads, in one-letter code: Phosphopantetheine adenylyltransferase (169 aa).

Residue S10 participates in substrate binding. ATP is bound by residues 10-11 (SF) and H18. Residues K42, L74, and R88 each coordinate substrate. ATP-binding positions include 89-91 (GLR), E99, and 124-130 (YAFLSSS).

Belongs to the bacterial CoaD family. In terms of assembly, homohexamer. Mg(2+) serves as cofactor.

Its subcellular location is the cytoplasm. The catalysed reaction is (R)-4'-phosphopantetheine + ATP + H(+) = 3'-dephospho-CoA + diphosphate. It functions in the pathway cofactor biosynthesis; coenzyme A biosynthesis; CoA from (R)-pantothenate: step 4/5. In terms of biological role, reversibly transfers an adenylyl group from ATP to 4'-phosphopantetheine, yielding dephospho-CoA (dPCoA) and pyrophosphate. The chain is Phosphopantetheine adenylyltransferase from Geobacillus sp. (strain WCH70).